The chain runs to 96 residues: Small ribosomal subunit protein bS18 (96 aa).

The segment covering 1–22 (MYKDVDSHQRDSRSDGHQDGFK) has biased composition (basic and acidic residues). The interval 1–25 (MYKDVDSHQRDSRSDGHQDGFKKNP) is disordered.

The protein belongs to the bacterial ribosomal protein bS18 family. Part of the 30S ribosomal subunit. Forms a tight heterodimer with protein bS6.

In terms of biological role, binds as a heterodimer with protein bS6 to the central domain of the 16S rRNA, where it helps stabilize the platform of the 30S subunit. This is Small ribosomal subunit protein bS18 from Borrelia hermsii (strain HS1 / DAH).